A 135-amino-acid chain; its full sequence is UPF0355 protein SACOL0457 (135 aa).

It belongs to the UPF0355 family.

The polypeptide is UPF0355 protein SACOL0457 (Staphylococcus aureus (strain COL)).